Here is a 448-residue protein sequence, read N- to C-terminus: Porin AaxA (448 aa).

The signal sequence occupies residues 1-24; sequence MASFRSSLLSALCAYGMMVMPAYA.

The protein belongs to the OprB family.

The protein localises to the cell outer membrane. In terms of biological role, facilitates L-arginine uptake, as part of the AaxABC system. The arginine uptake by the bacterium in the macrophage may be a virulence factor against the host innate immune response. This Chlamydia abortus (strain DSM 27085 / S26/3) (Chlamydophila abortus) protein is Porin AaxA (aaxA).